Here is a 236-residue protein sequence, read N- to C-terminus: Small ribosomal subunit protein uS5 (236 aa).

Residues glutamate 61–isoleucine 124 form the S5 DRBM domain.

Belongs to the universal ribosomal protein uS5 family. As to quaternary structure, part of the 30S ribosomal subunit. Contacts protein S4.

With S4 and S12 plays an important role in translational accuracy. In Pyrococcus furiosus (strain ATCC 43587 / DSM 3638 / JCM 8422 / Vc1), this protein is Small ribosomal subunit protein uS5.